Here is a 152-residue protein sequence, read N- to C-terminus: Cell division protein SepF (152 aa).

This sequence belongs to the SepF family. As to quaternary structure, homodimer. Interacts with FtsZ.

The protein localises to the cytoplasm. Its function is as follows. Cell division protein that is part of the divisome complex and is recruited early to the Z-ring. Probably stimulates Z-ring formation, perhaps through the cross-linking of FtsZ protofilaments. Its function overlaps with FtsA. The sequence is that of Cell division protein SepF from Listeria monocytogenes serotype 4b (strain CLIP80459).